A 79-amino-acid chain; its full sequence is Small ribosomal subunit protein uS17 (79 aa).

The protein belongs to the universal ribosomal protein uS17 family. Part of the 30S ribosomal subunit.

Functionally, one of the primary rRNA binding proteins, it binds specifically to the 5'-end of 16S ribosomal RNA. This is Small ribosomal subunit protein uS17 from Bartonella henselae (strain ATCC 49882 / DSM 28221 / CCUG 30454 / Houston 1) (Rochalimaea henselae).